Consider the following 167-residue polypeptide: EF-hand calcium-binding domain-containing protein 11 (167 aa).

EF-hand domains are found at residues 17–52 (AERKKIELVFHQCDVDKKGYMSREDLKIAVVMLFGY), 91–126 (DPYEKARQIFSAFDVHCRGFLKLDDFKSAFKRVAPR), and 127–162 (LQERTVLEAFRHADQDSDGHISFKDFENIISYGLAN). Residues D140, D142, D144, H146, and D151 each contribute to the Ca(2+) site.

The sequence is that of EF-hand calcium-binding domain-containing protein 11 (efcab11) from Danio rerio (Zebrafish).